A 492-amino-acid polypeptide reads, in one-letter code: Xaa-Pro dipeptidase (492 aa).

At Ala-2 the chain carries N-acetylalanine. Residue Ser-167 is modified to Phosphoserine. Position 255 (His-255) interacts with a dipeptide. The Mn(2+) site is built by Asp-276, Asp-287, and His-370. Position 287 (Asp-287) interacts with a dipeptide. 2 residues coordinate a dipeptide: His-377 and Arg-398. Residues Glu-412 and Glu-452 each coordinate Mn(2+).

The protein belongs to the peptidase M24B family. Eukaryotic-type prolidase subfamily. Homodimer. Mn(2+) serves as cofactor.

It carries out the reaction Xaa-L-Pro dipeptide + H2O = an L-alpha-amino acid + L-proline. Its function is as follows. Dipeptidase that catalyzes the hydrolysis of dipeptides with a prolyl (Xaa-Pro) or hydroxyprolyl residue in the C-terminal position. The preferred dipeptide substrate is Gly-Pro, but other Xaa-Pro dipeptides, such as Ala-Pro, Met-Pro, Phe-Pro, Val-Pro and Leu-Pro, can be cleaved. Plays an important role in collagen metabolism because the high level of iminoacids in collagen. The sequence is that of Xaa-Pro dipeptidase (Pepd) from Rattus norvegicus (Rat).